A 251-amino-acid polypeptide reads, in one-letter code: MTSLVSLENVSVSFGQRRVLSDVSLELSPGKILTLLGPNGAGKSTLVRVVLGLVAPDEGVIKRNGQLRIGYVPQKLYLDTTLPLTVNRFLRLRPGTQKTDILPALKRVQAGHLIDAPMQKLSGGETQRVLLARALLNRPQLLVLDEPTQGVDVNGQVALYDLIDQLRRELDCAVLMVSHDLHLVMAKTDEVLCLNHHICCSGAPEVVSMHPEFISMFGPRGAEQLGIYRHHHNHRHDLQGRIVLRRGNGHS.

In terms of domain architecture, ABC transporter spans 5–220 (VSLENVSVSF…PEFISMFGPR (216 aa)). 37 to 44 (GPNGAGKS) is a binding site for ATP.

It belongs to the ABC transporter superfamily. Zinc importer (TC 3.A.1.15.5) family. As to quaternary structure, the complex is composed of two ATP-binding proteins (ZnuC), two transmembrane proteins (ZnuB) and a solute-binding protein (ZnuA).

The protein localises to the cell inner membrane. It catalyses the reaction Zn(2+)(out) + ATP(in) + H2O(in) = Zn(2+)(in) + ADP(in) + phosphate(in) + H(+)(in). In terms of biological role, part of the ABC transporter complex ZnuABC involved in zinc import. Responsible for energy coupling to the transport system. In Salmonella choleraesuis (strain SC-B67), this protein is Zinc import ATP-binding protein ZnuC.